Reading from the N-terminus, the 321-residue chain is CRISPR-associated aCascade subunit Cas7/Csa2 2 (321 aa).

This sequence belongs to the CRISPR-associated protein Cas7/Cst2/DevR family. Subtype I-a/Apern subfamily. As to quaternary structure, part of the aCascade ribonucleoprotein complex, minimally composed of Csa2 and Cas5a, which binds crRNA. Other possible components of aCascade in strain P1 are Cas6b (SSO1437) and Csa5 (SSO1443), while SSO1399, Cas5b (SSO1400) and SSO1401 have sometimes been seen weakly associated. Csa2 is probably the major RNA-binding subunit. The Csa2-Cas5a-crRNA complex also binds target DNA homologous to crRNA, probably forming an R-loop. Purified aCascade forms a filament about 6 nm in width.

CRISPR (clustered regularly interspaced short palindromic repeat) is an adaptive immune system that provides protection against mobile genetic elements (viruses, transposable elements and conjugative plasmids). CRISPR clusters contain spacers, sequences complementary to antecedent mobile elements, and target invading nucleic acids. CRISPR clusters are transcribed and processed into CRISPR RNA (crRNA). This is CRISPR-associated aCascade subunit Cas7/Csa2 2 (csa2b) from Saccharolobus solfataricus (strain ATCC 35092 / DSM 1617 / JCM 11322 / P2) (Sulfolobus solfataricus).